Consider the following 264-residue polypeptide: 3-methyl-2-oxobutanoate hydroxymethyltransferase (264 aa).

Mg(2+) is bound by residues Asp45 and Asp84. Residues 45-46 (DS), Asp84, and Lys112 each bind 3-methyl-2-oxobutanoate. Mg(2+) is bound at residue Glu114. Glu181 acts as the Proton acceptor in catalysis.

Belongs to the PanB family. Homodecamer; pentamer of dimers. Requires Mg(2+) as cofactor.

It is found in the cytoplasm. The enzyme catalyses 3-methyl-2-oxobutanoate + (6R)-5,10-methylene-5,6,7,8-tetrahydrofolate + H2O = 2-dehydropantoate + (6S)-5,6,7,8-tetrahydrofolate. It participates in cofactor biosynthesis; (R)-pantothenate biosynthesis; (R)-pantoate from 3-methyl-2-oxobutanoate: step 1/2. Catalyzes the reversible reaction in which hydroxymethyl group from 5,10-methylenetetrahydrofolate is transferred onto alpha-ketoisovalerate to form ketopantoate. The protein is 3-methyl-2-oxobutanoate hydroxymethyltransferase of Pectobacterium atrosepticum (strain SCRI 1043 / ATCC BAA-672) (Erwinia carotovora subsp. atroseptica).